We begin with the raw amino-acid sequence, 1465 residues long: Neuropathy target esterase sws (1465 aa).

The Lumenal segment spans residues 1–34 (MDVLEMLRASASGSYNTIFSEAWCQYVSKQITAT). The chain crosses the membrane as a helical span at residues 35 to 55 (MYMYCALGMMGVLFLAWFMYF). Residues 56–1465 (KRMARLRLRD…RSSANNETKN (1410 aa)) lie on the Cytoplasmic side of the membrane. Position 174–301 (174–301 (IFGHFEKPVF…IRVIQVIMIR (128 aa))) interacts with a nucleoside 3',5'-cyclic phosphate. 2 stretches are compositionally biased toward polar residues: residues 331 to 349 (STMS…RQTP) and 434 to 454 (QQSV…TPDG). Disordered stretches follow at residues 331 to 421 (STMS…TEVH) and 434 to 460 (QQSV…SCPP). Serine 446 and serine 455 each carry phosphoserine. A nucleoside 3',5'-cyclic phosphate contacts are provided by residues 484–611 (ELGL…VVRR) and 600–727 (IVLD…LSHR). Residues 954-1120 (LVLGGGGARG…VNNLPGHLWR (167 aa)) enclose the PNPLA domain. A GXGXXG motif is present at residues 958–963 (GGGARG). The short motif at 985–989 (GVSIG) is the GXSXG element. The Nucleophile role is filled by serine 987. Aspartate 1107 functions as the Proton acceptor in the catalytic mechanism. Residues 1107–1109 (DGG) carry the DGA/G motif. Position 1201 is a phosphoserine (serine 1201). A disordered region spans residues 1371–1465 (LERKTDKSTQ…RSSANNETKN (95 aa)). Low complexity predominate over residues 1378–1390 (STQSSPPTSSRTS). Over residues 1392 to 1402 (RGKEEARHMDN) the composition is skewed to basic and acidic residues. The span at 1413-1424 (TGSGATEGIHTS) shows a compositional bias: polar residues. The segment covering 1447–1456 (VYKDEDKENR) has biased composition (basic and acidic residues).

This sequence belongs to the NTE family. As to quaternary structure, interacts with Pka-C3; interaction inhibits the catalytic function of Pka-C3 and the esterase activity of sws.

Its subcellular location is the endoplasmic reticulum membrane. It carries out the reaction a 1-acyl-sn-glycero-3-phosphocholine + H2O = sn-glycerol 3-phosphocholine + a fatty acid + H(+). Functionally, phospholipase B that deacylates intracellular phosphatidylcholine (PtdCho), generating glycerophosphocholine (GroPtdCho). This deacylation occurs at both sn-2 and sn-1 positions of PtdCho. Its specific chemical modification by certain organophosphorus (OP) compounds leads to distal axonopathy. Plays a role in the signaling mechanism between neurons and glia that regulates glia wrapping during development of the adult brain. Essential for membrane lipid homeostasis and cell survival in both neurons and glia of the adult brain. The polypeptide is Neuropathy target esterase sws (Drosophila erecta (Fruit fly)).